Reading from the N-terminus, the 438-residue chain is tRNA-dihydrouridine(16/17) synthase [NAD(P)(+)]-like (438 aa).

Residues 23 to 25 and Q79 contribute to the FMN site; that span reads PMV. The active-site Proton donor is the C108. FMN contacts are provided by residues K147, H175, 208-210, and 232-233; these read NGN and AE. The tract at residues 343 to 387 is disordered; the sequence is GPKEGSKENSSGRSKRALEEEEGSMEGLSKNKLKKQLRNPHKTFD. The segment covering 373–383 has biased composition (basic residues); that stretch reads NKLKKQLRNPH.

The protein belongs to the Dus family. Dus1 subfamily. FMN is required as a cofactor.

It localises to the cytoplasm. The protein localises to the nucleus. The catalysed reaction is 5,6-dihydrouridine(16) in tRNA + NADP(+) = uridine(16) in tRNA + NADPH + H(+). It carries out the reaction 5,6-dihydrouridine(16) in tRNA + NAD(+) = uridine(16) in tRNA + NADH + H(+). It catalyses the reaction 5,6-dihydrouridine(17) in tRNA + NAD(+) = uridine(17) in tRNA + NADH + H(+). The enzyme catalyses 5,6-dihydrouridine(17) in tRNA + NADP(+) = uridine(17) in tRNA + NADPH + H(+). Its function is as follows. Catalyzes the synthesis of dihydrouridine, a modified base found in the D-loop of most tRNAs. Specifically modifies U16 and U17 in cytoplasmic tRNAs. Affects the level of some mature tRNA and thereby the total cellular translation. This Rattus norvegicus (Rat) protein is tRNA-dihydrouridine(16/17) synthase [NAD(P)(+)]-like (Dus1l).